Reading from the N-terminus, the 878-residue chain is Phosphoenolpyruvate carboxylase (878 aa).

Catalysis depends on residues histidine 137 and lysine 545.

This sequence belongs to the PEPCase type 1 family. Requires Mg(2+) as cofactor.

It carries out the reaction oxaloacetate + phosphate = phosphoenolpyruvate + hydrogencarbonate. In terms of biological role, forms oxaloacetate, a four-carbon dicarboxylic acid source for the tricarboxylic acid cycle. This chain is Phosphoenolpyruvate carboxylase, found in Yersinia pseudotuberculosis serotype O:1b (strain IP 31758).